Here is a 239-residue protein sequence, read N- to C-terminus: Probable transcriptional regulatory protein ABO_1803 (239 aa).

This sequence belongs to the TACO1 family.

The protein localises to the cytoplasm. This is Probable transcriptional regulatory protein ABO_1803 from Alcanivorax borkumensis (strain ATCC 700651 / DSM 11573 / NCIMB 13689 / SK2).